Here is a 430-residue protein sequence, read N- to C-terminus: Serine--tRNA ligase (430 aa).

237–239 (TAE) serves as a coordination point for L-serine. 268-270 (RSE) contacts ATP. Residue glutamate 291 coordinates L-serine. Position 355 to 358 (355 to 358 (EISS)) interacts with ATP. Residue serine 391 participates in L-serine binding.

It belongs to the class-II aminoacyl-tRNA synthetase family. Type-1 seryl-tRNA synthetase subfamily. As to quaternary structure, homodimer. The tRNA molecule binds across the dimer.

Its subcellular location is the cytoplasm. The catalysed reaction is tRNA(Ser) + L-serine + ATP = L-seryl-tRNA(Ser) + AMP + diphosphate + H(+). The enzyme catalyses tRNA(Sec) + L-serine + ATP = L-seryl-tRNA(Sec) + AMP + diphosphate + H(+). The protein operates within aminoacyl-tRNA biosynthesis; selenocysteinyl-tRNA(Sec) biosynthesis; L-seryl-tRNA(Sec) from L-serine and tRNA(Sec): step 1/1. In terms of biological role, catalyzes the attachment of serine to tRNA(Ser). Is also able to aminoacylate tRNA(Sec) with serine, to form the misacylated tRNA L-seryl-tRNA(Sec), which will be further converted into selenocysteinyl-tRNA(Sec). This Shigella boydii serotype 18 (strain CDC 3083-94 / BS512) protein is Serine--tRNA ligase.